The primary structure comprises 266 residues: MSFIDSMKLDFVGHLFGIRNRGLATACCAVAVASAIAFPYIRRDYQTFLSGGPSYAPQNIKGYLIVCVLALFRQEQKGLAIYDRLPEKRRWLPDLPPRNGPRPITTSHIIQRQRNQAPDSKFALEELKATVIPRVQARHTDLTHLSLSKFEFHAEAIFLLPSVPIDDPKNVPSHDTVRRTKREIAHMHDYHDFTLHLALAAQDGKEVVAKGWGQRHPLAGPGVPGPPTEWTFIYAPRNEEELAVVEMIIEASIGYMTNDPAGTVIV.

A helical transmembrane segment spans residues 22 to 41 (GLATACCAVAVASAIAFPYI).

The protein belongs to the fungal luciferase family.

The protein localises to the membrane. It catalyses the reaction 3-hydroxyhispidin + O2 = (E)-caffeoylpyruvate + hnu + CO2. The enzyme catalyses 3-hydroxyhispidin + O2 = 4-[(E)-2-(3,4-dihydroxyphenyl)ethenyl]-1,7-dihydroxy-2,3,5-trioxabicyclo[2.2.2]oct-7-en-6-one. Functionally, luciferase; part of the gene cluster that mediates the fungal bioluminescence cycle. Uses the fungal luciferin 3-hydroxyhispidin as a substrate to produce an endoperoxide as a high-energy intermediate with decomposition that yields oxyluciferin (also known as caffeoylpyruvate) and light emission. The fungal bioluminescence cycle begins with the hispidin synthetase that catalyzes the formation of hispidin which is further hydroxylated by the hispidin-3-hydroxylase, yielding the fungal luciferin 3-hydroxyhispidin. The luciferase then produces an endoperoxide as a high-energy intermediate with decomposition that yields oxyluciferin and light emission. Oxyluciferin can be recycled to caffeic acid by caffeoylpyruvate hydrolase. The chain is Luciferase from Armillaria ostoyae (Armillaria root rot fungus).